The chain runs to 248 residues: mRNA-decapping protein OPG122 (248 aa).

One can recognise a Nudix hydrolase domain in the interval 45 to 227 (HKRVSVSAIL…IAKYALDTAK (183 aa)). Positions 125-147 (GGIPKRGENVPECLSREIKEEVN) match the Nudix box motif.

This sequence belongs to the Nudix hydrolase family. In terms of assembly, interacts with the late transcription elongation factor VLTF-4/OPG110. Interacts with the late transcription factors VLTF-1. It depends on Mg(2+) as a cofactor. Mn(2+) is required as a cofactor.

The protein localises to the host mitochondrion. Acts with RNA polymerase to initiate transcription from late gene promoters. The protein is mRNA-decapping protein OPG122 (OPG122) of Cynomys gunnisoni (Gunnison's prairie dog).